A 272-amino-acid polypeptide reads, in one-letter code: 3-keto-5-aminohexanoate cleavage enzyme (272 aa).

Glu-15 is a binding site for (5S)-5-amino-3-oxohexanoate. Zn(2+) contacts are provided by His-47 and His-49. (5S)-5-amino-3-oxohexanoate contacts are provided by Ser-83, Gly-86, and Thr-107. Glu-226 serves as a coordination point for Zn(2+).

Belongs to the BKACE family. Kce subfamily. As to quaternary structure, homotetramer. The cofactor is Zn(2+).

The catalysed reaction is (5S)-5-amino-3-oxohexanoate + acetyl-CoA = (3S)-3-aminobutanoyl-CoA + acetoacetate. The protein operates within amino-acid degradation; L-lysine degradation via acetate pathway. Its activity is regulated as follows. 3-fold increase in activity by addition of 10 mM 2-mercaptoethanol. Addition of CoCl(2) and to a lesser extent MnCl(2) increases the activity but not MgCl(2). Inhibited by phosphate buffer but not by 5,5'-dithio-2-nitrobenzoic acid. Functionally, involved in the anaerobic fermentation of lysine. Catalyzes the reversible reaction between 3-keto-5-aminohexanoate (KAH) and acetyl-CoA to form 3-aminobutyryl-CoA and acetoacetate. The reaction involves the deprotonation of KAH, the nucleophilic addition onto acetyl-CoA and the intramolecular transfer of the CoA moiety. It can also use beta-alanyl-CoA as substrate. This is 3-keto-5-aminohexanoate cleavage enzyme from Fusobacterium nucleatum subsp. nucleatum (strain ATCC 25586 / DSM 15643 / BCRC 10681 / CIP 101130 / JCM 8532 / KCTC 2640 / LMG 13131 / VPI 4355).